The primary structure comprises 75 residues: Large ribosomal subunit protein bL31 (75 aa).

The protein belongs to the bacterial ribosomal protein bL31 family. Type A subfamily. Part of the 50S ribosomal subunit.

In terms of biological role, binds the 23S rRNA. The polypeptide is Large ribosomal subunit protein bL31 (Chlorobaculum tepidum (strain ATCC 49652 / DSM 12025 / NBRC 103806 / TLS) (Chlorobium tepidum)).